A 314-amino-acid chain; its full sequence is Cytochrome f (314 aa).

Residues 1–30 (MATNKFFKSLLFALTIAINSFGFCIQDAVA) form the signal peptide. Y31, C51, C54, and H55 together coordinate heme. A helical membrane pass occupies residues 280-300 (IYGYLAFCFSVLITQIMLVLK).

It belongs to the cytochrome f family. As to quaternary structure, the 4 large subunits of the cytochrome b6-f complex are cytochrome b6, subunit IV (17 kDa polypeptide, petD), cytochrome f and the Rieske protein, while the 4 small subunits are PetG, PetL, PetM and PetN. The complex functions as a dimer. Requires heme as cofactor.

It is found in the plastid. It localises to the chloroplast thylakoid membrane. In terms of biological role, component of the cytochrome b6-f complex, which mediates electron transfer between photosystem II (PSII) and photosystem I (PSI), cyclic electron flow around PSI, and state transitions. The chain is Cytochrome f from Phaeodactylum tricornutum (strain CCAP 1055/1).